The primary structure comprises 125 residues: MARIASVNIPDNKRLVVSLTYIYGLGPTMAAEICNKAKISKDKKVKELTDQELIGLRNIIESEYKVEGDLRREVTLNIKKKKDIRCYQGLRHIRKLPVRGQNTHSNARTRKGKAIAIAGKKKAVK.

It belongs to the universal ribosomal protein uS13 family. In terms of assembly, part of the 30S ribosomal subunit. Forms a loose heterodimer with protein S19. Forms two bridges to the 50S subunit in the 70S ribosome.

Its function is as follows. Located at the top of the head of the 30S subunit, it contacts several helices of the 16S rRNA. In the 70S ribosome it contacts the 23S rRNA (bridge B1a) and protein L5 of the 50S subunit (bridge B1b), connecting the 2 subunits; these bridges are implicated in subunit movement. Contacts the tRNAs in the A and P-sites. The sequence is that of Small ribosomal subunit protein uS13 from Rickettsia africae (strain ESF-5).